The sequence spans 446 residues: Asparagine--tRNA ligase (446 aa).

This sequence belongs to the class-II aminoacyl-tRNA synthetase family. In terms of assembly, homodimer.

It localises to the cytoplasm. The enzyme catalyses tRNA(Asn) + L-asparagine + ATP = L-asparaginyl-tRNA(Asn) + AMP + diphosphate + H(+). In Sorangium cellulosum (strain So ce56) (Polyangium cellulosum (strain So ce56)), this protein is Asparagine--tRNA ligase.